The primary structure comprises 780 residues: Tyrosine-protein phosphatase non-receptor type 12 (780 aa).

Met1 carries the post-translational modification N-acetylmethionine. Residue Ser19 is modified to Phosphoserine. The Tyrosine-protein phosphatase domain maps to 28 to 293; that stretch reads FARDFMRLRR…ELVHRAIAQL (266 aa). Substrate contacts are provided by residues Arg36, 63 to 67, Asp199, 231 to 237, and Gln278; these read RYKDI and CSAGCGR. The active-site Phosphocysteine intermediate is Cys231. Ser332, Ser435, Ser449, and Ser468 each carry phosphoserine. The interaction with TGFB1I1 stretch occupies residues 345–438; that stretch reads VEGDAKEEIL…KLERNLSFEI (94 aa). Residues 502-519 are compositionally biased toward polar residues; that stretch reads QSNKVSVTPPEESQNSDT. Disordered stretches follow at residues 502–639, 657–725, and 744–780; these read QSNK…STES, GTTH…EKCD, and SDKR…SEWT. Residues Thr509 and Thr519 each carry the phosphothreonine modification. Positions 521-533 are enriched in basic and acidic residues; sequence PRPDRLPLDEKGH. Polar residues-rich tracts occupy residues 552-577 and 587-601; these read EGNS…TQVE and TSPL…TNPL. The residue at position 567 (Ser567) is a Phosphoserine. Thr569 bears the Phosphothreonine mark. Residues Ser571 and Ser596 each carry the phosphoserine modification. At Thr598 the chain carries Phosphothreonine. Over residues 602-613 the composition is skewed to basic and acidic residues; sequence HSDDSDSDERNS. Residues Ser603, Ser606, Ser608, and Ser613 each carry the phosphoserine modification. Residues 622 to 639 are compositionally biased toward low complexity; it reads TNISTASATVSAATSTES. Ser673 and Ser689 each carry phosphoserine. Residues 690–703 are compositionally biased toward polar residues; the sequence is EHNTPVRSEWSELQ. Thr693 bears the Phosphothreonine mark. Composition is skewed to basic and acidic residues over residues 704–725 and 771–780; these read SQER…EKCD and GPRDPPSEWT.

This sequence belongs to the protein-tyrosine phosphatase family. Non-receptor class 4 subfamily. Interacts with TGFB1I1. Interacts with PSTPIP1. Interacts with PTK2B/PYK2. Interacts with LPXN. Interacts with SORBS2; this interaction greatly enhances WASF1 dephosphorylation and might mediate partial translocation to focal adhesion sites. Phosphorylated by STK24/MST3 and this results in inhibition of its activity.

The protein localises to the cytoplasm. It is found in the cell junction. The protein resides in the focal adhesion. Its subcellular location is the cell projection. It localises to the podosome. It catalyses the reaction O-phospho-L-tyrosyl-[protein] + H2O = L-tyrosyl-[protein] + phosphate. Its function is as follows. Dephosphorylates a range of proteins, and thereby regulates cellular signaling cascades. Dephosphorylates cellular tyrosine kinases, such as ERBB2 and PTK2B/PYK2, and thereby regulates signaling via ERBB2 and PTK2B/PYK2. Selectively dephosphorylates ERBB2 phosphorylated at 'Tyr-1112', 'Tyr-1196', and/or 'Tyr-1248'. This Homo sapiens (Human) protein is Tyrosine-protein phosphatase non-receptor type 12 (PTPN12).